The sequence spans 574 residues: Isocitrate dehydrogenase kinase/phosphatase (574 aa).

ATP-binding positions include 311 to 317 (APGIRGM) and K332. D367 is an active-site residue.

This sequence belongs to the AceK family.

It is found in the cytoplasm. It carries out the reaction L-seryl-[isocitrate dehydrogenase] + ATP = O-phospho-L-seryl-[isocitrate dehydrogenase] + ADP + H(+). Bifunctional enzyme which can phosphorylate or dephosphorylate isocitrate dehydrogenase (IDH) on a specific serine residue. This is a regulatory mechanism which enables bacteria to bypass the Krebs cycle via the glyoxylate shunt in response to the source of carbon. When bacteria are grown on glucose, IDH is fully active and unphosphorylated, but when grown on acetate or ethanol, the activity of IDH declines drastically concomitant with its phosphorylation. The sequence is that of Isocitrate dehydrogenase kinase/phosphatase from Shigella boydii serotype 4 (strain Sb227).